The primary structure comprises 426 residues: Fc receptor-like B (426 aa).

Residues M1–A17 form the signal peptide. Ig-like C2-type domains follow at residues P23 to S101 and D103 to T189. Disulfide bonds link C44-C85 and C124-C168. N-linked (GlcNAc...) asparagine glycosylation is present at N152. The tract at residues E400–S426 is disordered. Positions E406–S426 are enriched in polar residues.

Expressed at low levels. Expressed in B-lymphocytes. Detected in tonsil, lung, kidney, spleen and placenta. Expressed by a small subset of germinal center B-cells in tonsils and by melanocytes (at protein level).

Its subcellular location is the cytoplasm. It is found in the endoplasmic reticulum. This Homo sapiens (Human) protein is Fc receptor-like B (FCRLB).